Here is a 168-residue protein sequence, read N- to C-terminus: Protein-export protein SecB (168 aa).

It belongs to the SecB family. As to quaternary structure, homotetramer, a dimer of dimers. One homotetramer interacts with 1 SecA dimer.

Its subcellular location is the cytoplasm. Functionally, one of the proteins required for the normal export of preproteins out of the cell cytoplasm. It is a molecular chaperone that binds to a subset of precursor proteins, maintaining them in a translocation-competent state. It also specifically binds to its receptor SecA. The polypeptide is Protein-export protein SecB (Sinorhizobium medicae (strain WSM419) (Ensifer medicae)).